Consider the following 157-residue polypeptide: Protein Smg homolog (157 aa).

The protein belongs to the Smg family.

This Xanthomonas oryzae pv. oryzae (strain MAFF 311018) protein is Protein Smg homolog.